The following is a 105-amino-acid chain: Dynein axonemal light chain 4 (105 aa).

The protein belongs to the dynein light chain family. In terms of assembly, consists of at least two heavy chains and a number of intermediate and light chains.

The protein resides in the cytoplasm. The protein localises to the cytoskeleton. It is found in the cilium axoneme. In terms of biological role, force generating protein of respiratory cilia. Produces force towards the minus ends of microtubules. Dynein has ATPase activity. The sequence is that of Dynein axonemal light chain 4 (Dnal4) from Mus musculus (Mouse).